Reading from the N-terminus, the 383-residue chain is Probable sphingolipid long chain base-responsive protein pil2 (383 aa).

S162 is modified (phosphoserine). Disordered stretches follow at residues P292–Q336 and G356–A383. A compositionally biased stretch (low complexity) spans T311–S324. Polar residues-rich tracts occupy residues K325–Q336 and V368–A383.

Phosphorylated by ksg1 and ppk21. Phosphorylation is regulated by sphingolipid long chain bases (LCBs).

Negative regulator of cell wall integrity (CWI) in unstressed cells, probably by inhibiting protein kinase ksg1/ppk21 activity and regulating their downstream CWI pathways pck2-MAP kinase pathway and protein kinase gad8 pathway. Activity may be regulated by the transient increase of sphingolipid long chain bases (LCBs) during heat stress. In Schizosaccharomyces pombe (strain 972 / ATCC 24843) (Fission yeast), this protein is Probable sphingolipid long chain base-responsive protein pil2 (pil2).